Reading from the N-terminus, the 27-residue chain is Nemertide alpha-8 (27 aa).

3 disulfides stabilise this stretch: cysteine 2–cysteine 16, cysteine 9–cysteine 20, and cysteine 15–cysteine 26.

It belongs to the nemertide family. As to expression, confined to the epidermis and to the mucus layer.

It localises to the secreted. Its function is as follows. Highly potent toxin against both insect and some mammalian sodium channels (Nav). It potently inhibits inactivation of insect sodium channels of B.germanica (BgNav1) and also delays the inactivation of mammalian Nav with potent activity on Nav1.3/SCN3A and Nav1.4/SCN4A. 1 uM is enough to completely inhibits the inactivation, resulting in sustained non-inactivating currents. In addition, the toxin significantly enhances the recovery from inactivation, and the open state is not required for the toxin to interact with the channel. In vivo, injection into brine shrimp (Artemia salina) stops movement or causes death after 24 hours (EC(50)=0.4 uM). The polypeptide is Nemertide alpha-8 (Riseriellus occultus (Ribbon worm)).